A 193-amino-acid chain; its full sequence is Protein hunchback (193 aa).

Disordered stretches follow at residues 16–126 and 146–193; these read SHHH…ATTT and SNDK…KYMA. Residues 17–31 show a composition bias toward basic residues; sequence HHHHHHHAHHSHHQH. Composition is skewed to low complexity over residues 35–46 and 56–77; these read SNSNSNASSPHQ and SSNN…QQQQ. A compositionally biased stretch (polar residues) spans 89–99; the sequence is PSPSNNDQNSR. Over residues 174 to 193 the composition is skewed to basic and acidic residues; it reads EPEKEHDLMSNSSEDMKYMA.

Belongs to the hunchback C2H2-type zinc-finger protein family.

It localises to the nucleus. Functionally, gap class segmentation protein that controls development of head structures. This is Protein hunchback (hb) from Drosophila iki (Fruit fly).